Here is an 842-residue protein sequence, read N- to C-terminus: Squamosa promoter-binding-like protein 9 (842 aa).

The segment covering 1-18 (MDAPGGGGGGGGGGGGVD) has biased composition (gly residues). Disordered regions lie at residues 1 to 22 (MDAP…AGEP), 59 to 97 (ALLP…RVRK), and 140 to 168 (RKKP…TPAE). The segment covering 69-85 (PAEAEAEAAGPASLPSS) has biased composition (low complexity). The segment covering 146 to 162 (AGRGSGAAVGGSGGGAS) has biased composition (gly residues). The SBP-type; atypical zinc finger occupies 168 to 245 (EMKCQVPGCE…ERHNKRRRRK (78 aa)). Residues Cys171, Cys176, Cys193, Cys196, Cys212, Cys215, His219, and Cys231 each coordinate Zn(2+). Positions 228–244 (KRSCRRKLERHNKRRRR) match the Bipartite nuclear localization signal motif. Residues 236 to 246 (ERHNKRRRRKP) are compositionally biased toward basic residues. Residues 236 to 256 (ERHNKRRRRKPDSKGILEKDI) are disordered.

As to expression, ubiquitous.

The protein localises to the nucleus. Trans-acting factor that binds specifically to the consensus nucleotide sequence 5'-TNCGTACAA-3'. The chain is Squamosa promoter-binding-like protein 9 (SPL9) from Oryza sativa subsp. japonica (Rice).